The chain runs to 171 residues: 3-hydroxydecanoyl-[acyl-carrier-protein] dehydratase (171 aa).

His70 is an active-site residue.

It belongs to the thioester dehydratase family. FabA subfamily. In terms of assembly, homodimer.

Its subcellular location is the cytoplasm. The catalysed reaction is a (3R)-hydroxyacyl-[ACP] = a (2E)-enoyl-[ACP] + H2O. The enzyme catalyses (3R)-hydroxydecanoyl-[ACP] = (2E)-decenoyl-[ACP] + H2O. It catalyses the reaction (2E)-decenoyl-[ACP] = (3Z)-decenoyl-[ACP]. It functions in the pathway lipid metabolism; fatty acid biosynthesis. Necessary for the introduction of cis unsaturation into fatty acids. Catalyzes the dehydration of (3R)-3-hydroxydecanoyl-ACP to E-(2)-decenoyl-ACP and then its isomerization to Z-(3)-decenoyl-ACP. Can catalyze the dehydratase reaction for beta-hydroxyacyl-ACPs with saturated chain lengths up to 16:0, being most active on intermediate chain length. This chain is 3-hydroxydecanoyl-[acyl-carrier-protein] dehydratase, found in Shewanella loihica (strain ATCC BAA-1088 / PV-4).